We begin with the raw amino-acid sequence, 945 residues long: Isoleucine--tRNA ligase (945 aa).

The 'HIGH' region signature appears at 66-76; sequence PYANGDIHLGH. Glutamate 581 is a binding site for L-isoleucyl-5'-AMP. Residues 622 to 626 carry the 'KMSKS' region motif; the sequence is KMSKS. Lysine 625 is an ATP binding site. The Zn(2+) site is built by cysteine 908, cysteine 911, cysteine 928, and cysteine 931.

It belongs to the class-I aminoacyl-tRNA synthetase family. IleS type 1 subfamily. Monomer. Zn(2+) is required as a cofactor.

The protein resides in the cytoplasm. It carries out the reaction tRNA(Ile) + L-isoleucine + ATP = L-isoleucyl-tRNA(Ile) + AMP + diphosphate. Functionally, catalyzes the attachment of isoleucine to tRNA(Ile). As IleRS can inadvertently accommodate and process structurally similar amino acids such as valine, to avoid such errors it has two additional distinct tRNA(Ile)-dependent editing activities. One activity is designated as 'pretransfer' editing and involves the hydrolysis of activated Val-AMP. The other activity is designated 'posttransfer' editing and involves deacylation of mischarged Val-tRNA(Ile). The polypeptide is Isoleucine--tRNA ligase (Burkholderia ambifaria (strain ATCC BAA-244 / DSM 16087 / CCUG 44356 / LMG 19182 / AMMD) (Burkholderia cepacia (strain AMMD))).